A 498-amino-acid chain; its full sequence is U4/U6 small nuclear ribonucleoprotein Prp31 (498 aa).

Positions 1–24 are disordered; that stretch reads MSLADELLADLEEAAEEEEENLID. The segment covering 7 to 24 has biased composition (acidic residues); sequence LLADLEEAAEEEEENLID. Coiled-coil stretches lie at residues 84-119 and 180-214; these read EAAP…KYSK and DEEL…MSFI. Residues 214-332 form the Nop domain; that stretch reads IAPNLSIIVG…IERKFDKWQE (119 aa). The disordered stretch occupies residues 333 to 356; that stretch reads PPPVKQVKPLPAPLDGQRKKRGGR. Residues 350–363 carry the Nuclear localization signal (NLS) motif; it reads RKKRGGRRYRKMKE.

The protein belongs to the PRP31 family. Identified in the spliceosome B complex. Component of the U4/U6-U5 tri-snRNP complex. Component of some MLL1/MLL complex.

The protein resides in the nucleus. It localises to the nucleus speckle. It is found in the cajal body. Functionally, involved in pre-mRNA splicing as component of the spliceosome. Required for the assembly of the U4/U5/U6 tri-snRNP complex, one of the building blocks of the spliceosome. This is U4/U6 small nuclear ribonucleoprotein Prp31 (prpf31) from Xenopus laevis (African clawed frog).